A 192-amino-acid polypeptide reads, in one-letter code: Pyridoxal 5'-phosphate synthase subunit PdxT (192 aa).

53 to 55 lines the L-glutamine pocket; that stretch reads GES. Residue C82 is the Nucleophile of the active site. L-glutamine is bound by residues R109 and 137–138; that span reads IR. Residues H173 and E175 each act as charge relay system in the active site.

This sequence belongs to the glutaminase PdxT/SNO family. As to quaternary structure, in the presence of PdxS, forms a dodecamer of heterodimers. Only shows activity in the heterodimer.

The catalysed reaction is aldehydo-D-ribose 5-phosphate + D-glyceraldehyde 3-phosphate + L-glutamine = pyridoxal 5'-phosphate + L-glutamate + phosphate + 3 H2O + H(+). It catalyses the reaction L-glutamine + H2O = L-glutamate + NH4(+). It functions in the pathway cofactor biosynthesis; pyridoxal 5'-phosphate biosynthesis. Catalyzes the hydrolysis of glutamine to glutamate and ammonia as part of the biosynthesis of pyridoxal 5'-phosphate. The resulting ammonia molecule is channeled to the active site of PdxS. This Methanoculleus marisnigri (strain ATCC 35101 / DSM 1498 / JR1) protein is Pyridoxal 5'-phosphate synthase subunit PdxT.